Consider the following 377-residue polypeptide: tRNA-specific 2-thiouridylase MnmA (377 aa).

Residues 12–19 and M38 each bind ATP; that span reads GMSGGVDS. An interaction with target base in tRNA region spans residues 98-100; that stretch reads NPD. C103 (nucleophile) is an active-site residue. C103 and C200 are joined by a disulfide. Position 127 (G127) interacts with ATP. The interaction with tRNA stretch occupies residues 150-152; that stretch reads KDQ. The Cysteine persulfide intermediate role is filled by C200. The interval 313 to 314 is interaction with tRNA; the sequence is RY.

This sequence belongs to the MnmA/TRMU family.

It is found in the cytoplasm. It catalyses the reaction S-sulfanyl-L-cysteinyl-[protein] + uridine(34) in tRNA + AH2 + ATP = 2-thiouridine(34) in tRNA + L-cysteinyl-[protein] + A + AMP + diphosphate + H(+). Its function is as follows. Catalyzes the 2-thiolation of uridine at the wobble position (U34) of tRNA, leading to the formation of s(2)U34. The protein is tRNA-specific 2-thiouridylase MnmA of Pediococcus pentosaceus (strain ATCC 25745 / CCUG 21536 / LMG 10740 / 183-1w).